The sequence spans 229 residues: Adenylate kinase (229 aa).

10 to 15 (GSGKGT) is a binding site for ATP. An NMP region spans residues 30 to 59 (ESGVIFREHISKGTELGKQAKSYIDKGELV). Residues Ser-31, Arg-36, 57 to 59 (ELV), 84 to 87 (GFPR), and Gln-91 each bind AMP. The tract at residues 125-164 (GRRICKTNNNHPNNVSIDSIKPDGNNCRVCHGELIVRTDD) is LID. ATP is bound at residue Arg-126. Residues Arg-161 and Arg-173 each contribute to the AMP site. Asn-209 contributes to the ATP binding site.

The protein belongs to the adenylate kinase family. In terms of assembly, monomer.

The protein localises to the cytoplasm. It carries out the reaction AMP + ATP = 2 ADP. It participates in purine metabolism; AMP biosynthesis via salvage pathway; AMP from ADP: step 1/1. In terms of biological role, catalyzes the reversible transfer of the terminal phosphate group between ATP and AMP. Plays an important role in cellular energy homeostasis and in adenine nucleotide metabolism. The protein is Adenylate kinase of Lawsonia intracellularis (strain PHE/MN1-00).